We begin with the raw amino-acid sequence, 545 residues long: tRNA-2-methylthio-N(6)-dimethylallyladenosine synthase (545 aa).

The tract at residues Met1–Thr32 is disordered. One can recognise an MTTase N-terminal domain in the interval Arg58–His174. [4Fe-4S] cluster-binding residues include Cys67, Cys103, Cys137, Cys211, Cys215, and Cys218. Positions Arg197–Glu433 constitute a Radical SAM core domain. In terms of domain architecture, TRAM spans Arg436–Val504.

This sequence belongs to the methylthiotransferase family. MiaB subfamily. As to quaternary structure, monomer. It depends on [4Fe-4S] cluster as a cofactor.

It is found in the cytoplasm. It carries out the reaction N(6)-dimethylallyladenosine(37) in tRNA + (sulfur carrier)-SH + AH2 + 2 S-adenosyl-L-methionine = 2-methylsulfanyl-N(6)-dimethylallyladenosine(37) in tRNA + (sulfur carrier)-H + 5'-deoxyadenosine + L-methionine + A + S-adenosyl-L-homocysteine + 2 H(+). Catalyzes the methylthiolation of N6-(dimethylallyl)adenosine (i(6)A), leading to the formation of 2-methylthio-N6-(dimethylallyl)adenosine (ms(2)i(6)A) at position 37 in tRNAs that read codons beginning with uridine. This chain is tRNA-2-methylthio-N(6)-dimethylallyladenosine synthase, found in Mycobacterium bovis (strain BCG / Pasteur 1173P2).